The following is a 485-amino-acid chain: Isocitrate dehydrogenase [NADP], chloroplastic/mitochondrial (485 aa).

A chloroplast and mitochondrion-targeting transit peptide spans methionine 1–arginine 65. NADP(+)-binding positions include threonine 147 to threonine 149 and arginine 154. Substrate is bound at residue threonine 149. Substrate contacts are provided by residues serine 166 to arginine 172, arginine 181, and arginine 204. Residue aspartate 323 coordinates Mn(2+). An NADP(+)-binding site is contributed by lysine 331. Residue aspartate 346 coordinates Mn(2+). Residues glycine 381–histidine 386 and asparagine 399 contribute to the NADP(+) site.

The protein belongs to the isocitrate and isopropylmalate dehydrogenases family. The cofactor is Mg(2+). Mn(2+) serves as cofactor.

The protein localises to the plastid. It is found in the chloroplast. It localises to the mitochondrion. The catalysed reaction is D-threo-isocitrate + NADP(+) = 2-oxoglutarate + CO2 + NADPH. Functionally, may be involved in response to oxidative stresses. This is Isocitrate dehydrogenase [NADP], chloroplastic/mitochondrial from Arabidopsis thaliana (Mouse-ear cress).